We begin with the raw amino-acid sequence, 318 residues long: Beta-ketoacyl-[acyl-carrier-protein] synthase III (318 aa).

Active-site residues include Cys112 and His245. Positions 246–250 are ACP-binding; the sequence is QANIR. Asn275 is a catalytic residue.

It belongs to the thiolase-like superfamily. FabH family. In terms of assembly, homodimer.

It is found in the cytoplasm. The enzyme catalyses malonyl-[ACP] + acetyl-CoA + H(+) = 3-oxobutanoyl-[ACP] + CO2 + CoA. It functions in the pathway lipid metabolism; fatty acid biosynthesis. In terms of biological role, catalyzes the condensation reaction of fatty acid synthesis by the addition to an acyl acceptor of two carbons from malonyl-ACP. Catalyzes the first condensation reaction which initiates fatty acid synthesis and may therefore play a role in governing the total rate of fatty acid production. Possesses both acetoacetyl-ACP synthase and acetyl transacylase activities. Its substrate specificity determines the biosynthesis of branched-chain and/or straight-chain of fatty acids. The protein is Beta-ketoacyl-[acyl-carrier-protein] synthase III of Rickettsia conorii (strain ATCC VR-613 / Malish 7).